The following is a 71-amino-acid chain: Translational regulator CsrA (71 aa).

The protein belongs to the CsrA/RsmA family. As to quaternary structure, homodimer; the beta-strands of each monomer intercalate to form a hydrophobic core, while the alpha-helices form wings that extend away from the core.

The protein localises to the cytoplasm. Functionally, a key translational regulator that binds mRNA to regulate translation initiation and/or mRNA stability. Mediates global changes in gene expression, shifting from rapid growth to stress survival by linking envelope stress, the stringent response and the catabolite repression systems. Usually binds in the 5'-UTR; binding at or near the Shine-Dalgarno sequence prevents ribosome-binding, repressing translation, binding elsewhere in the 5'-UTR can activate translation and/or stabilize the mRNA. Its function is antagonized by small RNA(s). In Pseudoalteromonas atlantica (strain T6c / ATCC BAA-1087), this protein is Translational regulator CsrA.